We begin with the raw amino-acid sequence, 159 residues long: Transcriptional repressor NrdR (159 aa).

The disordered stretch occupies residues 1–21 (MRCPKCQHNKSNVIDSRQAED). A zinc finger lies at 3 to 34 (CPKCQHNKSNVIDSRQAEDGNTIRRRRECDAC). The ATP-cone domain maps to 49 to 139 (LLVVKKDGTR…VYRSFKDVDE (91 aa)).

Belongs to the NrdR family. It depends on Zn(2+) as a cofactor.

Negatively regulates transcription of bacterial ribonucleotide reductase nrd genes and operons by binding to NrdR-boxes. The polypeptide is Transcriptional repressor NrdR (Streptococcus thermophilus (strain ATCC BAA-491 / LMD-9)).